The primary structure comprises 455 residues: Ribulose bisphosphate carboxylase large chain (455 aa).

Lys5 is modified (N6,N6,N6-trimethyllysine). Substrate-binding residues include Asn114 and Thr164. The active-site Proton acceptor is Lys166. Lys168 is a substrate binding site. Mg(2+) contacts are provided by Lys192, Asp194, and Glu195. Position 192 is an N6-carboxylysine (Lys192). Residue His285 is the Proton acceptor of the active site. Substrate is bound by residues Arg286, His318, and Ser370.

It belongs to the RuBisCO large chain family. Type I subfamily. As to quaternary structure, heterohexadecamer of 8 large chains and 8 small chains. Requires Mg(2+) as cofactor.

It localises to the plastid. The protein resides in the chloroplast. It carries out the reaction 2 (2R)-3-phosphoglycerate + 2 H(+) = D-ribulose 1,5-bisphosphate + CO2 + H2O. The enzyme catalyses D-ribulose 1,5-bisphosphate + O2 = 2-phosphoglycolate + (2R)-3-phosphoglycerate + 2 H(+). Its function is as follows. RuBisCO catalyzes two reactions: the carboxylation of D-ribulose 1,5-bisphosphate, the primary event in carbon dioxide fixation, as well as the oxidative fragmentation of the pentose substrate in the photorespiration process. Both reactions occur simultaneously and in competition at the same active site. This chain is Ribulose bisphosphate carboxylase large chain, found in Tamarindus indica (Tamarind).